Consider the following 105-residue polypeptide: uncharacterized protein (105 aa).

The protein localises to the cytoplasm. Its subcellular location is the nucleus. This is an uncharacterized protein from Schizosaccharomyces pombe (strain 972 / ATCC 24843) (Fission yeast).